A 112-amino-acid polypeptide reads, in one-letter code: Large ribosomal subunit protein uL18 (112 aa).

It belongs to the universal ribosomal protein uL18 family. In terms of assembly, part of the 50S ribosomal subunit; part of the 5S rRNA/L5/L18/L25 subcomplex. Contacts the 5S and 23S rRNAs.

Functionally, this is one of the proteins that bind and probably mediate the attachment of the 5S RNA into the large ribosomal subunit, where it forms part of the central protuberance. This is Large ribosomal subunit protein uL18 from Thermus thermophilus (strain ATCC BAA-163 / DSM 7039 / HB27).